The sequence spans 172 residues: Large ribosomal subunit protein uL10 (172 aa).

The protein belongs to the universal ribosomal protein uL10 family. Part of the ribosomal stalk of the 50S ribosomal subunit. The N-terminus interacts with L11 and the large rRNA to form the base of the stalk. The C-terminus forms an elongated spine to which 3 L12 dimers bind in a sequential fashion forming a heptameric L10(L12)2(L12)2(L12)2 complex.

Forms part of the ribosomal stalk, playing a central role in the interaction of the ribosome with GTP-bound translation factors. The protein is Large ribosomal subunit protein uL10 of Agrobacterium fabrum (strain C58 / ATCC 33970) (Agrobacterium tumefaciens (strain C58)).